Consider the following 520-residue polypeptide: Amine oxidase [flavin-containing] B (520 aa).

Over 1 to 489 (MNSKCDVVVV…TFLERHLPSV (489 aa)) the chain is Cytoplasmic. The residue at position 52 (K52) is an N6-acetyllysine. An S-8alpha-FAD cysteine modification is found at C397. The chain crosses the membrane as a helical; Anchor for type IV membrane protein span at residues 490-516 (PGLLRLIRLTTVVSAVALGFLAQKRGL). The Mitochondrial intermembrane segment spans residues 517–520 (LLRI).

It belongs to the flavin monoamine oxidase family. Monomer, homo- or heterodimer (containing two subunits of similar size). Each subunit contains a covalently bound flavin. Enzymatically active as monomer. It depends on FAD as a cofactor.

Its subcellular location is the mitochondrion outer membrane. The catalysed reaction is a secondary aliphatic amine + O2 + H2O = a primary amine + an aldehyde + H2O2. It carries out the reaction (R)-adrenaline + O2 + H2O = (R)-3,4-dihydroxymandelaldehyde + methylamine + H2O2. The enzyme catalyses a primary methyl amine + O2 + H2O = an aldehyde + H2O2 + NH4(+). It catalyses the reaction benzylamine + O2 + H2O = benzaldehyde + H2O2 + NH4(+). The catalysed reaction is dopamine + O2 + H2O = 3,4-dihydroxyphenylacetaldehyde + H2O2 + NH4(+). It carries out the reaction tyramine + O2 + H2O = (4-hydroxyphenyl)acetaldehyde + H2O2 + NH4(+). The enzyme catalyses (R)-noradrenaline + O2 + H2O = (R)-3,4-dihydroxymandelaldehyde + H2O2 + NH4(+). It catalyses the reaction 2-phenylethylamine + O2 + H2O = 2-phenylacetaldehyde + H2O2 + NH4(+). The catalysed reaction is N-acetylputrescine + O2 + H2O = 4-acetamidobutanal + H2O2 + NH4(+). Functionally, catalyzes the oxidative deamination of primary and some secondary amines such as neurotransmitters, and exogenous amines including the tertiary amine, neurotoxin 1-methyl-4-phenyl-1,2,3,6-tetrahydropyridine (MPTP), with concomitant reduction of oxygen to hydrogen peroxide and participates in the metabolism of neuroactive and vasoactive amines in the central nervous system and peripheral tissues. Preferentially degrades benzylamine and phenylethylamine. The protein is Amine oxidase [flavin-containing] B of Cavia porcellus (Guinea pig).